Consider the following 73-residue polypeptide: uncharacterized protein (73 aa).

This is an uncharacterized protein from Enterobacteria phage RB18 (Bacteriophage RB18).